The chain runs to 87 residues: Small ribosomal subunit protein bS20 (87 aa).

The tract at residues 1–20 is disordered; it reads MANHKSAEKRARQTIKRTER.

This sequence belongs to the bacterial ribosomal protein bS20 family.

In terms of biological role, binds directly to 16S ribosomal RNA. In Campylobacter lari (strain RM2100 / D67 / ATCC BAA-1060), this protein is Small ribosomal subunit protein bS20.